The chain runs to 306 residues: Plant-type L-asparaginase (306 aa).

Residue Thr-176 is the Nucleophile of the active site. Substrate contacts are provided by residues 203 to 206 (RVGD) and 225 to 228 (TGLG).

It belongs to the Ntn-hydrolase family. In terms of assembly, heterotetramer of two alpha and two beta chains arranged as a dimer of alpha/beta heterodimers. Autocleaved. Generates the alpha and beta subunits. The N-terminal residue of the beta subunit is thought to be responsible for the nucleophile hydrolase activity.

The catalysed reaction is L-asparagine + H2O = L-aspartate + NH4(+). Functionally, catalyzes the hydrolysis of L-asparagine into L-aspartate and ammonia. This is Plant-type L-asparaginase from Pyrococcus furiosus (strain ATCC 43587 / DSM 3638 / JCM 8422 / Vc1).